The primary structure comprises 389 residues: Fructose-1,6-bisphosphate aldolase/phosphatase (389 aa).

Residue aspartate 17 is the Proton acceptor; for FBP phosphatase activity of the active site. Mg(2+) is bound by residues aspartate 17, histidine 24, aspartate 57, and aspartate 58. Residue histidine 24 coordinates beta-D-fructose 1,6-bisphosphate. Histidine 24 provides a ligand contact to dihydroxyacetone phosphate. Tyrosine 95 lines the beta-D-fructose 1,6-bisphosphate pocket. Glutamine 99 contacts Mg(2+). Residue 108-109 (GN) participates in beta-D-fructose 1,6-bisphosphate binding. Aspartate 136 lines the Mg(2+) pocket. Beta-D-fructose 1,6-bisphosphate is bound at residue lysine 137. A dihydroxyacetone phosphate-binding site is contributed by lysine 137. Residue tyrosine 233 is the Proton donor/acceptor; for FBP aldolase activity of the active site. Lysine 236, aspartate 237, and aspartate 238 together coordinate Mg(2+). The active-site Schiff-base intermediate with DHAP; for FBP aldolase activity is lysine 236. Beta-D-fructose 1,6-bisphosphate is bound by residues 246-247 (QS), arginine 270, aspartate 291, and tyrosine 352. Arginine 270 and aspartate 291 together coordinate dihydroxyacetone phosphate.

This sequence belongs to the FBP aldolase/phosphatase family. In terms of assembly, homooctamer; dimer of tetramers. The cofactor is Mg(2+).

The catalysed reaction is beta-D-fructose 1,6-bisphosphate + H2O = beta-D-fructose 6-phosphate + phosphate. The enzyme catalyses beta-D-fructose 1,6-bisphosphate = D-glyceraldehyde 3-phosphate + dihydroxyacetone phosphate. Its pathway is carbohydrate biosynthesis; gluconeogenesis. Functionally, catalyzes two subsequent steps in gluconeogenesis: the aldol condensation of dihydroxyacetone phosphate (DHAP) and glyceraldehyde-3-phosphate (GA3P) to fructose-1,6-bisphosphate (FBP), and the dephosphorylation of FBP to fructose-6-phosphate (F6P). The polypeptide is Fructose-1,6-bisphosphate aldolase/phosphatase (Methanocaldococcus jannaschii (strain ATCC 43067 / DSM 2661 / JAL-1 / JCM 10045 / NBRC 100440) (Methanococcus jannaschii)).